The sequence spans 161 residues: uncharacterized protein (161 aa).

Residues 5 to 25 (GPTLLSLLAALLVSLGLLLWY) traverse the membrane as a helical segment.

The protein belongs to the IIV-6 203L/325L family.

The protein resides in the membrane. This is an uncharacterized protein from Invertebrate iridescent virus 3 (IIV-3).